Consider the following 837-residue polypeptide: Striatin-interacting protein 1 (837 aa).

Methionine 1 bears the N-acetylmethionine mark. Disordered stretches follow at residues 1-67 (MEPA…ESPD) and 333-423 (AASP…KGLP). Residues 18–35 (PQPPPPPPPAAAQPPPGA) show a composition bias toward pro residues. Low complexity predominate over residues 36–46 (PRAAAGLLPGG). Basic and acidic residues predominate over residues 47–60 (KAREFNRNQRKDSE). A phosphoserine mark is found at serine 59, serine 335, and serine 339. Basic and acidic residues predominate over residues 356 to 377 (KALIKQDNLDAFNERDPYKADD). Positions 378-391 (SREEEEENDDDNSL) are enriched in acidic residues. Serine 788 is subject to Phosphoserine. Residues 796–837 (DNCLQSVLGQRVDLPEDFQMNYDLWLEREVFSKPISWEELLQ) are required for STRIPAK core complex formation.

This sequence belongs to the STRIP family. Part of the core of STRIPAK complexes composed of PP2A catalytic and scaffolding subunits, the striatins (PP2A regulatory subunits), the striatin-associated proteins MOB4, STRIP1 and STRIP2, PDCD10 and members of the STE20 kinases, such as STK24 and STK26. The STRIPAK complex can be extended by adapter proteins such as SLMAP:SIKE1, CTTNBP2 or CTTNBP2NL. Interacts with CDC42BPB. Interacts with CTTNBP2NL.

The protein resides in the cytoplasm. Its function is as follows. Plays a role in the regulation of cell morphology and cytoskeletal organization. Required in the cortical actin filament dynamics and cell shape. Part of the striatin-interacting phosphatase and kinase (STRIPAK) complexes. STRIPAK complexes have critical roles in protein (de)phosphorylation and are regulators of multiple signaling pathways including Hippo, MAPK, nuclear receptor and cytoskeleton remodeling. Different types of STRIPAK complexes are involved in a variety of biological processes such as cell growth, differentiation, apoptosis, metabolism and immune regulation. This chain is Striatin-interacting protein 1, found in Homo sapiens (Human).